The primary structure comprises 91 residues: Small ribosomal subunit protein uS15 (91 aa).

It belongs to the universal ribosomal protein uS15 family. As to quaternary structure, part of the 30S ribosomal subunit. Forms a bridge to the 50S subunit in the 70S ribosome, contacting the 23S rRNA.

Functionally, one of the primary rRNA binding proteins, it binds directly to 16S rRNA where it helps nucleate assembly of the platform of the 30S subunit by binding and bridging several RNA helices of the 16S rRNA. In terms of biological role, forms an intersubunit bridge (bridge B4) with the 23S rRNA of the 50S subunit in the ribosome. The polypeptide is Small ribosomal subunit protein uS15 (Deinococcus geothermalis (strain DSM 11300 / CIP 105573 / AG-3a)).